Here is a 185-residue protein sequence, read N- to C-terminus: UPF0397 protein PAM_019 (185 aa).

The next 5 membrane-spanning stretches (helical) occupy residues 13–33 (IGLSAAIFFVLSCFASIPVGF), 42–62 (AFLAFIAVAFGPAVGFYVGLI), 69–89 (FILFGNVSWNWVLCSALIGFI), 109–129 (IVYFWLYQVAFNFIIWGFFAP), and 143–163 (VYLQSFLIVISNILAYSVVGI).

It belongs to the UPF0397 family.

The protein resides in the cell membrane. This Onion yellows phytoplasma (strain OY-M) protein is UPF0397 protein PAM_019.